Reading from the N-terminus, the 177-residue chain is MDLAIQYPWFRRSLGSFYPSRLFDQFFGEGLFDYDLFPFFSSTISPYYRQSVFRNFLDSGISEVRSEKDRFMINLNVKHFSPEELSVKIVDDYVEIHGKHAERQEDQGRVSREFHRTYHLPSNLNESAIACSLSNEGLLTLCCPKTRPGDDSNWQDRPIPVSREEKQGTQPEIRADP.

Methionine 1 is modified (N-acetylmethionine). A sHSP domain is found at 52-162 (VFRNFLDSGI…NWQDRPIPVS (111 aa)). 2 residues coordinate Zn(2+): histidine 100 and glutamate 102. A disulfide bridge links cysteine 131 with cysteine 142. Residues 146–177 (TRPGDDSNWQDRPIPVSREEKQGTQPEIRADP) form a disordered region. Serine 162 is a glycosylation site (O-linked (GlcNAc) serine). The span at 162–177 (SREEKQGTQPEIRADP) shows a compositional bias: basic and acidic residues.

It belongs to the small heat shock protein (HSP20) family. Heteropolymer composed of three CRYAA and one CRYAB subunits. Inter-subunit bridging via zinc ions enhances stability, which is crucial as there is no protein turn over in the lens. Can also form homodimers and homotetramers (dimers of dimers) which serve as the building blocks of homooligomers.

It is found in the cytoplasm. The protein localises to the nucleus. In terms of biological role, contributes to the transparency and refractive index of the lens. May act as a chaperone, preventing aggregation of various proteins under a wide range of stress conditions. This chain is Alpha-crystallin A chain (cryaa), found in Squalus acanthias (Spiny dogfish).